The primary structure comprises 248 residues: Ubiquinone/menaquinone biosynthesis C-methyltransferase UbiE (248 aa).

Positions 68 and 92 each coordinate S-adenosyl-L-methionine.

It belongs to the class I-like SAM-binding methyltransferase superfamily. MenG/UbiE family.

It catalyses the reaction a 2-demethylmenaquinol + S-adenosyl-L-methionine = a menaquinol + S-adenosyl-L-homocysteine + H(+). The enzyme catalyses a 2-methoxy-6-(all-trans-polyprenyl)benzene-1,4-diol + S-adenosyl-L-methionine = a 5-methoxy-2-methyl-3-(all-trans-polyprenyl)benzene-1,4-diol + S-adenosyl-L-homocysteine + H(+). Its pathway is quinol/quinone metabolism; menaquinone biosynthesis; menaquinol from 1,4-dihydroxy-2-naphthoate: step 2/2. It functions in the pathway cofactor biosynthesis; ubiquinone biosynthesis. Its function is as follows. Methyltransferase required for the conversion of demethylmenaquinol (DMKH2) to menaquinol (MKH2) and the conversion of 2-polyprenyl-6-methoxy-1,4-benzoquinol (DDMQH2) to 2-polyprenyl-3-methyl-6-methoxy-1,4-benzoquinol (DMQH2). The sequence is that of Ubiquinone/menaquinone biosynthesis C-methyltransferase UbiE from Rickettsia peacockii (strain Rustic).